A 1100-amino-acid polypeptide reads, in one-letter code: Guanylate cyclase 2G (1100 aa).

A signal peptide spans methionine 1–alanine 43. At alanine 44–alanine 481 the chain is on the extracellular side. N-linked (GlcNAc...) asparagine glycosylation is found at asparagine 55, asparagine 85, asparagine 94, asparagine 217, asparagine 225, asparagine 238, asparagine 418, asparagine 440, and asparagine 443. A helical membrane pass occupies residues valine 482–leucine 502. Over tryptophan 503–leucine 1100 the chain is Cytoplasmic. A Protein kinase domain is found at serine 546–isoleucine 837. In terms of domain architecture, Guanylate cyclase spans threonine 901 to glutamate 1031.

The protein belongs to the adenylyl cyclase class-4/guanylyl cyclase family. As to quaternary structure, homooligomer. In vitro interacts with NPR1/GC-A. In terms of processing, N-glycosylated. In terms of tissue distribution, highly expressed in testis.

It is found in the cell membrane. The catalysed reaction is GTP = 3',5'-cyclic GMP + diphosphate. The protein is Guanylate cyclase 2G (Gucy2g) of Mus musculus (Mouse).